A 177-amino-acid polypeptide reads, in one-letter code: MERGMESEAFYGLSARGWDGSEVSLGSFRGCVIMIANVASSCKFAESNYKSFAGLLDKFYRKGLRILLFPCNQYLGQESRPIEEIRGEVSKKYSDRFVVFDKVDVFGKGAHPVFRHLVNTKNGKGRLGNFIKWNFTKFLVDRKGCVVKRFGPSDIVKEDDENLLRSIEDGENGMQNS.

The active site involves cysteine 42.

Belongs to the glutathione peroxidase family.

It localises to the cytoplasm. It carries out the reaction a hydroperoxy polyunsaturated fatty acid + 2 glutathione = a hydroxy polyunsaturated fatty acid + glutathione disulfide + H2O. Protects cells and enzymes from oxidative damage, by catalyzing the reduction of hydrogen peroxide, lipid peroxides and organic hydroperoxide, by glutathione. The sequence is that of Probable phospholipid hydroperoxide glutathione peroxidase from Encephalitozoon cuniculi (strain GB-M1) (Microsporidian parasite).